The primary structure comprises 233 residues: MTPHINAKIGDFYPQCLLCGDPLRVSYIAKKFLQDAKEITNVRNMLGFSGKYKGKGISLMGHGMGIASCTIYVTELIKTYQVKELLRIGTCGAISPKVGLKDIIMATGASTDSKTNRVRFLNHDLSATPDFELSLRAYQTAKRLGIDLKVGNVFSSDFFYSFETHAFDLMAQYNHLAIEMEAAGLYATAMELNSKALCLCSVSDHLITKEALSPKERVESFDNMIILALEMMS.

An a purine D-ribonucleoside-binding site is contributed by His4. Phosphate-binding positions include Gly20, Arg24, Arg43, and Arg87–Thr90. A purine D-ribonucleoside-binding positions include Glu179 to Glu181 and Ser203 to Asp204. Asp204 serves as the catalytic Proton donor.

This sequence belongs to the PNP/UDP phosphorylase family. In terms of assembly, homohexamer; trimer of homodimers.

It carries out the reaction a purine D-ribonucleoside + phosphate = a purine nucleobase + alpha-D-ribose 1-phosphate. The catalysed reaction is a purine 2'-deoxy-D-ribonucleoside + phosphate = a purine nucleobase + 2-deoxy-alpha-D-ribose 1-phosphate. In terms of biological role, catalyzes the reversible phosphorolytic breakdown of the N-glycosidic bond in the beta-(deoxy)ribonucleoside molecules, with the formation of the corresponding free purine bases and pentose-1-phosphate. This is Purine nucleoside phosphorylase DeoD-type from Helicobacter pylori (strain P12).